A 544-amino-acid polypeptide reads, in one-letter code: Chaperonin GroEL (544 aa).

ATP-binding positions include 29–32 (TLGP), 86–90 (DGTTT), Gly-413, 476–478 (NAA), and Asp-492.

It belongs to the chaperonin (HSP60) family. As to quaternary structure, forms a cylinder of 14 subunits composed of two heptameric rings stacked back-to-back. Interacts with the co-chaperonin GroES.

Its subcellular location is the cytoplasm. The catalysed reaction is ATP + H2O + a folded polypeptide = ADP + phosphate + an unfolded polypeptide.. Together with its co-chaperonin GroES, plays an essential role in assisting protein folding. The GroEL-GroES system forms a nano-cage that allows encapsulation of the non-native substrate proteins and provides a physical environment optimized to promote and accelerate protein folding. This Bacillus velezensis (strain DSM 23117 / BGSC 10A6 / LMG 26770 / FZB42) (Bacillus amyloliquefaciens subsp. plantarum) protein is Chaperonin GroEL.